A 445-amino-acid polypeptide reads, in one-letter code: Phosphoglucosamine mutase (445 aa).

Residue Ser102 is the Phosphoserine intermediate of the active site. Positions 102, 241, 243, and 245 each coordinate Mg(2+). Ser102 bears the Phosphoserine mark.

Belongs to the phosphohexose mutase family. Mg(2+) is required as a cofactor. Post-translationally, activated by phosphorylation.

It catalyses the reaction alpha-D-glucosamine 1-phosphate = D-glucosamine 6-phosphate. Catalyzes the conversion of glucosamine-6-phosphate to glucosamine-1-phosphate. The polypeptide is Phosphoglucosamine mutase (Hahella chejuensis (strain KCTC 2396)).